The sequence spans 312 residues: Malate dehydrogenase (312 aa).

Residues 7–13 (GAAGGIG) and Asp-34 each bind NAD(+). The substrate site is built by Arg-81 and Arg-87. NAD(+) contacts are provided by residues Asn-94 and 117 to 119 (ITN). Substrate contacts are provided by Asn-119 and Arg-153. The active-site Proton acceptor is His-177. Residue Met-227 coordinates NAD(+).

Belongs to the LDH/MDH superfamily. MDH type 1 family. In terms of assembly, homodimer.

It catalyses the reaction (S)-malate + NAD(+) = oxaloacetate + NADH + H(+). In terms of biological role, catalyzes the reversible oxidation of malate to oxaloacetate. This is Malate dehydrogenase from Serratia proteamaculans (strain 568).